A 474-amino-acid chain; its full sequence is Chromosomal replication initiator protein DnaA (474 aa).

The domain I, interacts with DnaA modulators stretch occupies residues 1-91; sequence MSEELWQRCL…STRASTPAAS (91 aa). Residues 89-138 are disordered; sequence AASYFNGSSSSSSNGPITTPAAAPAPRQPESDSRPQPTSLGGARKHRSNL. Positions 91 to 136 are domain II; that stretch reads SYFNGSSSSSSNGPITTPAAAPAPRQPESDSRPQPTSLGGARKHRS. Low complexity predominate over residues 96–113; it reads SSSSSSNGPITTPAAAPA. The tract at residues 137 to 354 is domain III, AAA+ region; sequence NLNTGFTFST…GALRRVIAHV (218 aa). Positions 182, 184, 185, and 186 each coordinate ATP. A domain IV, binds dsDNA region spans residues 355–474; the sequence is RFTGAQIDIG…YLNLLRTLTS (120 aa).

The protein belongs to the DnaA family. Oligomerizes as a right-handed, spiral filament on DNA at oriC.

The protein localises to the cytoplasm. Its function is as follows. Plays an essential role in the initiation and regulation of chromosomal replication. ATP-DnaA binds to the origin of replication (oriC) to initiate formation of the DNA replication initiation complex once per cell cycle. Binds the DnaA box (a 9 base pair repeat at the origin) and separates the double-stranded (ds)DNA. Forms a right-handed helical filament on oriC DNA; dsDNA binds to the exterior of the filament while single-stranded (ss)DNA is stabiized in the filament's interior. The ATP-DnaA-oriC complex binds and stabilizes one strand of the AT-rich DNA unwinding element (DUE), permitting loading of DNA polymerase. After initiation quickly degrades to an ADP-DnaA complex that is not apt for DNA replication. Binds acidic phospholipids. This Alcanivorax borkumensis (strain ATCC 700651 / DSM 11573 / NCIMB 13689 / SK2) protein is Chromosomal replication initiator protein DnaA.